The sequence spans 227 residues: dTTP/UTP pyrophosphatase (227 aa).

The Proton acceptor role is filled by Asp-98.

This sequence belongs to the Maf family. YhdE subfamily. A divalent metal cation is required as a cofactor.

It localises to the cytoplasm. It catalyses the reaction dTTP + H2O = dTMP + diphosphate + H(+). The catalysed reaction is UTP + H2O = UMP + diphosphate + H(+). In terms of biological role, nucleoside triphosphate pyrophosphatase that hydrolyzes dTTP and UTP. May have a dual role in cell division arrest and in preventing the incorporation of modified nucleotides into cellular nucleic acids. This chain is dTTP/UTP pyrophosphatase, found in Bartonella quintana (strain Toulouse) (Rochalimaea quintana).